A 558-amino-acid chain; its full sequence is Aurovertin biosynthesis cluster transcription factor aurF (558 aa).

It belongs to the POU transcription factor family. Class-3 subfamily.

It is found in the nucleus. Its function is as follows. Transcription factor that regulates the expression of the gene cluster that mediates the biosynthesis of aurovertins, fungal polyketides that exhibit potent inhibition of adenosine triphosphate synthase. This Calcarisporium arbuscula (Dendryphion arbuscula) protein is Aurovertin biosynthesis cluster transcription factor aurF.